The chain runs to 82 residues: Small ribosomal subunit protein uS17 (82 aa).

This sequence belongs to the universal ribosomal protein uS17 family. As to quaternary structure, part of the 30S ribosomal subunit.

In terms of biological role, one of the primary rRNA binding proteins, it binds specifically to the 5'-end of 16S ribosomal RNA. This chain is Small ribosomal subunit protein uS17, found in Aeromonas salmonicida (strain A449).